The following is a 941-amino-acid chain: Glycine dehydrogenase (decarboxylating) (941 aa).

Lys692 carries the post-translational modification N6-(pyridoxal phosphate)lysine.

This sequence belongs to the GcvP family. In terms of assembly, the glycine cleavage system is composed of four proteins: P, T, L and H. Requires pyridoxal 5'-phosphate as cofactor.

It carries out the reaction N(6)-[(R)-lipoyl]-L-lysyl-[glycine-cleavage complex H protein] + glycine + H(+) = N(6)-[(R)-S(8)-aminomethyldihydrolipoyl]-L-lysyl-[glycine-cleavage complex H protein] + CO2. Its function is as follows. The glycine cleavage system catalyzes the degradation of glycine. The P protein binds the alpha-amino group of glycine through its pyridoxal phosphate cofactor; CO(2) is released and the remaining methylamine moiety is then transferred to the lipoamide cofactor of the H protein. In Mycobacterium tuberculosis (strain ATCC 25177 / H37Ra), this protein is Glycine dehydrogenase (decarboxylating).